Reading from the N-terminus, the 202-residue chain is Outer-membrane lipoprotein carrier protein (202 aa).

Residues 1 to 18 form the signal peptide; that stretch reads MNKLFLILLLIFSHEVFS.

The protein belongs to the LolA family. In terms of assembly, monomer.

It is found in the periplasm. Its function is as follows. Participates in the translocation of lipoproteins from the inner membrane to the outer membrane. Only forms a complex with a lipoprotein if the residue after the N-terminal Cys is not an aspartate (The Asp acts as a targeting signal to indicate that the lipoprotein should stay in the inner membrane). The chain is Outer-membrane lipoprotein carrier protein from Legionella pneumophila (strain Paris).